Here is a 118-residue protein sequence, read N- to C-terminus: Large ribosomal subunit protein eL18 (118 aa).

It belongs to the eukaryotic ribosomal protein eL18 family.

This is Large ribosomal subunit protein eL18 from Nanoarchaeum equitans (strain Kin4-M).